Reading from the N-terminus, the 224-residue chain is Thymidylate kinase (224 aa).

13-20 is an ATP binding site; the sequence is GGEGAGKS.

This sequence belongs to the thymidylate kinase family.

The catalysed reaction is dTMP + ATP = dTDP + ADP. In terms of biological role, phosphorylation of dTMP to form dTDP in both de novo and salvage pathways of dTTP synthesis. The polypeptide is Thymidylate kinase (Agrobacterium fabrum (strain C58 / ATCC 33970) (Agrobacterium tumefaciens (strain C58))).